The chain runs to 710 residues: Interferon-induced GTP-binding protein Mx2 (710 aa).

The disordered stretch occupies residues 1 to 87 (MSLSFRPLKY…RSKGPENNLY (87 aa)). 2 stretches are compositionally biased toward polar residues: residues 39–50 (QTMSPPQWQVEE) and 58–79 (NNFSQLNLDPQQPEANGGQQRS). One can recognise a Dynamin-type G domain in the interval 112 to 383 (DLALPAIAVI…LIWHINKSLP (272 aa)). Positions 122 to 129 (GDQSSGKS) are G1 motif. 122 to 129 (GDQSSGKS) provides a ligand contact to GTP. The tract at residues 147-149 (ITR) is G2 motif. The tract at residues 221–224 (DLPG) is G3 motif. GTP-binding positions include 221 to 225 (DLPGI) and 290 to 293 (TKPD). The G4 motif stretch occupies residues 290-293 (TKPD). The tract at residues 322–325 (KCRG) is G5 motif. The GED domain maps to 619-710 (IVEIGVHLNA…ALYEFPHFKG (92 aa)).

Belongs to the TRAFAC class dynamin-like GTPase superfamily. Dynamin/Fzo/YdjA family.

The protein localises to the cytoplasm. It localises to the nucleus. Its function is as follows. Interferon-induced dynamin-like GTPase with antiviral activity against vesicular stomatitis virus (VSV). The protein is Interferon-induced GTP-binding protein Mx2 (MX2) of Bubalus bubalis (Domestic water buffalo).